Reading from the N-terminus, the 308-residue chain is Homoserine kinase (308 aa).

An ATP-binding site is contributed by 95-105 (PQSRGLGSSAA).

It belongs to the GHMP kinase family. Homoserine kinase subfamily.

The protein localises to the cytoplasm. It catalyses the reaction L-homoserine + ATP = O-phospho-L-homoserine + ADP + H(+). Its pathway is amino-acid biosynthesis; L-threonine biosynthesis; L-threonine from L-aspartate: step 4/5. Catalyzes the ATP-dependent phosphorylation of L-homoserine to L-homoserine phosphate. The sequence is that of Homoserine kinase from Corynebacterium diphtheriae (strain ATCC 700971 / NCTC 13129 / Biotype gravis).